A 262-amino-acid polypeptide reads, in one-letter code: Thiamine thiazole synthase (262 aa).

Residues A36, 55–56 (EK), G63, V127, and 154–156 (HVD) contribute to the NAD(+) site. Fe cation contacts are provided by D156 and H171. M224 is an NAD(+) binding site. A glycine-binding site is contributed by R234.

This sequence belongs to the THI4 family. In terms of assembly, homooctamer; tetramer of dimers. Fe(2+) serves as cofactor.

The enzyme catalyses hydrogen sulfide + glycine + NAD(+) = ADP-5-ethyl-4-methylthiazole-2-carboxylate + nicotinamide + 3 H2O + H(+). It functions in the pathway cofactor biosynthesis; thiamine diphosphate biosynthesis. Involved in the biosynthesis of the thiazole moiety of thiamine. Catalyzes the conversion of NAD and glycine to adenosine diphosphate 5-(2-hydroxyethyl)-4-methylthiazole-2-carboxylate (ADT), an adenylated thiazole intermediate, using free sulfide as a source of sulfur. The protein is Thiamine thiazole synthase of Methanothrix thermoacetophila (strain DSM 6194 / JCM 14653 / NBRC 101360 / PT) (Methanosaeta thermophila).